The primary structure comprises 385 residues: Serpin-Z1 (385 aa).

The RCL stretch occupies residues 317-341; that stretch reads GAEAAAATADGDCGCSLDFVEPPKK.

This sequence belongs to the serpin family.

In terms of biological role, probable serine protease inhibitor. This chain is Serpin-Z1, found in Arabidopsis thaliana (Mouse-ear cress).